A 470-amino-acid chain; its full sequence is ATP synthase subunit beta 2 (470 aa).

ATP is bound at residue 155–162 (GGAGVGKT).

This sequence belongs to the ATPase alpha/beta chains family. In terms of assembly, F-type ATPases have 2 components, CF(1) - the catalytic core - and CF(0) - the membrane proton channel. CF(1) has five subunits: alpha(3), beta(3), gamma(1), delta(1), epsilon(1). CF(0) has three main subunits: a(1), b(2) and c(9-12). The alpha and beta chains form an alternating ring which encloses part of the gamma chain. CF(1) is attached to CF(0) by a central stalk formed by the gamma and epsilon chains, while a peripheral stalk is formed by the delta and b chains.

It is found in the cell inner membrane. The catalysed reaction is ATP + H2O + 4 H(+)(in) = ADP + phosphate + 5 H(+)(out). Functionally, produces ATP from ADP in the presence of a proton gradient across the membrane. The catalytic sites are hosted primarily by the beta subunits. This chain is ATP synthase subunit beta 2, found in Nitrosospira multiformis (strain ATCC 25196 / NCIMB 11849 / C 71).